The primary structure comprises 185 residues: Large ribosomal subunit protein uL5 (185 aa).

It belongs to the universal ribosomal protein uL5 family. Part of the 50S ribosomal subunit; part of the 5S rRNA/L5/L18/L25 subcomplex. Contacts the 5S rRNA and the P site tRNA. Forms a bridge to the 30S subunit in the 70S ribosome.

In terms of biological role, this is one of the proteins that bind and probably mediate the attachment of the 5S RNA into the large ribosomal subunit, where it forms part of the central protuberance. In the 70S ribosome it contacts protein S13 of the 30S subunit (bridge B1b), connecting the 2 subunits; this bridge is implicated in subunit movement. Contacts the P site tRNA; the 5S rRNA and some of its associated proteins might help stabilize positioning of ribosome-bound tRNAs. This Streptomyces griseus subsp. griseus (strain JCM 4626 / CBS 651.72 / NBRC 13350 / KCC S-0626 / ISP 5235) protein is Large ribosomal subunit protein uL5.